The primary structure comprises 366 residues: Probable dual-specificity RNA methyltransferase RlmN (366 aa).

Residue glutamate 108 is the Proton acceptor of the active site. The region spanning 114–352 is the Radical SAM core domain; sequence YSDRSTLCIS…CTVRDTKGQE (239 aa). A disulfide bridge links cysteine 121 with cysteine 357. [4Fe-4S] cluster is bound by residues cysteine 128, cysteine 132, and cysteine 135. S-adenosyl-L-methionine-binding positions include 178 to 179, serine 212, 235 to 237, and asparagine 314; these read GE and SLH. The active-site S-methylcysteine intermediate is cysteine 357.

This sequence belongs to the radical SAM superfamily. RlmN family. [4Fe-4S] cluster is required as a cofactor.

Its subcellular location is the cytoplasm. The catalysed reaction is adenosine(2503) in 23S rRNA + 2 reduced [2Fe-2S]-[ferredoxin] + 2 S-adenosyl-L-methionine = 2-methyladenosine(2503) in 23S rRNA + 5'-deoxyadenosine + L-methionine + 2 oxidized [2Fe-2S]-[ferredoxin] + S-adenosyl-L-homocysteine. The enzyme catalyses adenosine(37) in tRNA + 2 reduced [2Fe-2S]-[ferredoxin] + 2 S-adenosyl-L-methionine = 2-methyladenosine(37) in tRNA + 5'-deoxyadenosine + L-methionine + 2 oxidized [2Fe-2S]-[ferredoxin] + S-adenosyl-L-homocysteine. Specifically methylates position 2 of adenine 2503 in 23S rRNA and position 2 of adenine 37 in tRNAs. The chain is Probable dual-specificity RNA methyltransferase RlmN from Corynebacterium glutamicum (strain ATCC 13032 / DSM 20300 / JCM 1318 / BCRC 11384 / CCUG 27702 / LMG 3730 / NBRC 12168 / NCIMB 10025 / NRRL B-2784 / 534).